Here is a 618-residue protein sequence, read N- to C-terminus: Arginine--tRNA ligase (618 aa).

Residues 113–123 carry the 'HIGH' region motif; it reads ANPIHPLHIGH.

It belongs to the class-I aminoacyl-tRNA synthetase family.

Its subcellular location is the cytoplasm. The enzyme catalyses tRNA(Arg) + L-arginine + ATP = L-arginyl-tRNA(Arg) + AMP + diphosphate. This Sulfolobus acidocaldarius (strain ATCC 33909 / DSM 639 / JCM 8929 / NBRC 15157 / NCIMB 11770) protein is Arginine--tRNA ligase.